The chain runs to 81 residues: UPF0386 protein Smed_0945 (81 aa).

It belongs to the UPF0386 family.

The chain is UPF0386 protein Smed_0945 from Sinorhizobium medicae (strain WSM419) (Ensifer medicae).